We begin with the raw amino-acid sequence, 118 residues long: Large ribosomal subunit protein bL20 (118 aa).

The protein belongs to the bacterial ribosomal protein bL20 family.

Binds directly to 23S ribosomal RNA and is necessary for the in vitro assembly process of the 50S ribosomal subunit. It is not involved in the protein synthesizing functions of that subunit. In Photorhabdus laumondii subsp. laumondii (strain DSM 15139 / CIP 105565 / TT01) (Photorhabdus luminescens subsp. laumondii), this protein is Large ribosomal subunit protein bL20.